The primary structure comprises 56 residues: Large ribosomal subunit protein bL33 (56 aa).

It belongs to the bacterial ribosomal protein bL33 family.

In Anaplasma phagocytophilum (strain HZ), this protein is Large ribosomal subunit protein bL33.